Consider the following 93-residue polypeptide: Guanine nucleotide-binding protein subunit gamma (93 aa).

Residues M1–M22 are disordered. C89 carries the S-palmitoyl cysteine lipid modification. A Cysteine methyl ester modification is found at C90. Residue C90 is the site of S-farnesyl cysteine attachment. Positions V91 to M93 are cleaved as a propeptide — removed in mature form.

Belongs to the G protein gamma family. G proteins are composed of 3 units, alpha, beta and gamma.

The protein localises to the membrane. In Neurospora crassa (strain ATCC 24698 / 74-OR23-1A / CBS 708.71 / DSM 1257 / FGSC 987), this protein is Guanine nucleotide-binding protein subunit gamma (gng-1).